A 145-amino-acid chain; its full sequence is D-aminoacyl-tRNA deacylase (145 aa).

A Gly-cisPro motif, important for rejection of L-amino acids motif is present at residues 137–138; it reads GP.

It belongs to the DTD family. In terms of assembly, homodimer.

The protein localises to the cytoplasm. It catalyses the reaction glycyl-tRNA(Ala) + H2O = tRNA(Ala) + glycine + H(+). It carries out the reaction a D-aminoacyl-tRNA + H2O = a tRNA + a D-alpha-amino acid + H(+). In terms of biological role, an aminoacyl-tRNA editing enzyme that deacylates mischarged D-aminoacyl-tRNAs. Also deacylates mischarged glycyl-tRNA(Ala), protecting cells against glycine mischarging by AlaRS. Acts via tRNA-based rather than protein-based catalysis; rejects L-amino acids rather than detecting D-amino acids in the active site. By recycling D-aminoacyl-tRNA to D-amino acids and free tRNA molecules, this enzyme counteracts the toxicity associated with the formation of D-aminoacyl-tRNA entities in vivo and helps enforce protein L-homochirality. The polypeptide is D-aminoacyl-tRNA deacylase (Serratia proteamaculans (strain 568)).